A 447-amino-acid chain; its full sequence is Argininosuccinate synthase (447 aa).

Residues 17–25 and Ala-43 each bind ATP; that span reads AFSGGLDTS. Tyr-99 is a binding site for L-citrulline. 2 residues coordinate ATP: Gly-129 and Thr-131. Thr-131, Asn-135, and Asp-136 together coordinate L-aspartate. Residue Asn-135 participates in L-citrulline binding. Asp-136 provides a ligand contact to ATP. Residues Arg-139 and Ser-192 each coordinate L-citrulline. Asp-194 contributes to the ATP binding site. L-citrulline is bound by residues Thr-201, Glu-203, and Glu-280.

This sequence belongs to the argininosuccinate synthase family. Type 2 subfamily. As to quaternary structure, homotetramer.

The protein resides in the cytoplasm. The catalysed reaction is L-citrulline + L-aspartate + ATP = 2-(N(omega)-L-arginino)succinate + AMP + diphosphate + H(+). It functions in the pathway amino-acid biosynthesis; L-arginine biosynthesis; L-arginine from L-ornithine and carbamoyl phosphate: step 2/3. The sequence is that of Argininosuccinate synthase from Shigella dysenteriae serotype 1 (strain Sd197).